The following is an 84-amino-acid chain: NADH-ubiquinone oxidoreductase chain 4L (84 aa).

2 helical membrane-spanning segments follow: residues Ile19–Ile39 and Ile50–Leu70.

Belongs to the complex I subunit 4L family.

It localises to the mitochondrion membrane. It carries out the reaction a ubiquinone + NADH + 5 H(+)(in) = a ubiquinol + NAD(+) + 4 H(+)(out). Functionally, core subunit of the mitochondrial membrane respiratory chain NADH dehydrogenase (Complex I) that is believed to belong to the minimal assembly required for catalysis. Complex I functions in the transfer of electrons from NADH to the respiratory chain. The immediate electron acceptor for the enzyme is believed to be ubiquinone. The polypeptide is NADH-ubiquinone oxidoreductase chain 4L (NAD4L) (Candida albicans (strain SC5314 / ATCC MYA-2876) (Yeast)).